The primary structure comprises 289 residues: Dehydrodolichyl diphosphate synthase 4 (289 aa).

The helical transmembrane segment at 2–22 (LSMLWFLLSLLSLLLLPCLRP) threads the bilayer.

Belongs to the UPP synthase family. It depends on Mg(2+) as a cofactor.

The protein resides in the endoplasmic reticulum membrane. It functions in the pathway protein modification; protein glycosylation. Functionally, catalyzes cis-prenyl chain elongation to produce the polyprenyl backbone of dolichol, a glycosyl carrier-lipid required for the biosynthesis of several classes of glycoprotein. The sequence is that of Dehydrodolichyl diphosphate synthase 4 from Arabidopsis thaliana (Mouse-ear cress).